The chain runs to 517 residues: Transmembrane protein 180 (517 aa).

Residues 1–11 lie on the Extracellular side of the membrane; the sequence is MRLGGPWAWLL. Residues 12-43 form a helical membrane-spanning segment; it reads GLPTAVVYGSLALFVSVLHNVFLLYYVDTFVS. Residues 44–55 lie on the Cytoplasmic side of the membrane; that stretch reads VYKIDKAAFWVG. Residues 56–74 form a helical membrane-spanning segment; sequence ETVFLLWNSLNDPLFGWLS. Residues 75–100 are Extracellular-facing; the sequence is DRQFLSSQPRSGAGLSSRAVVLARVR. A helical transmembrane segment spans residues 101–118; sequence ALGWHGPLLALSFLAFWV. At 119–126 the chain is on the cytoplasmic side; it reads PWAPAGLQ. Residues 127–151 form a helical membrane-spanning segment; that stretch reads FLLCLCLYDGFLTLVDLHHHALLAD. Residues 152–155 lie on the Extracellular side of the membrane; it reads LALS. Residues 156 to 179 traverse the membrane as a helical segment; that stretch reads AHDRTHLNFYCSLFSAAGSLSVFA. Over 180–191 the chain is Cytoplasmic; it reads SYAFWNKEDFSS. Residues 192-223 traverse the membrane as a helical segment; sequence FRAFCLALATGSGLGFVGAARLLRRRVEAAGR. Residues 224–264 lie on the Extracellular side of the membrane; sequence EPGCPAMAVNDGLCEEELLVGGEEAGSITLGQYLQQLARHR. A helical transmembrane segment spans residues 265 to 292; that stretch reads NFLWFVGMDLVQVFHCHFNSNFFPLFLE. At 293–305 the chain is on the cytoplasmic side; that stretch reads HLLSDHISLSTGS. Residues 306 to 325 traverse the membrane as a helical segment; it reads FLLGISYVAPHLNNLYFLPL. The Extracellular segment spans residues 326–330; sequence CRRWG. Residues 331–350 traverse the membrane as a helical segment; the sequence is VYAVVRGLFLLKLGLSLLML. The Cytoplasmic segment spans residues 351–358; sequence LAGPDHPG. The helical transmembrane segment at 359–393 threads the bilayer; it reads LLCLFIASNRVFTEGTCKLLTLVVTDLVDEDLVLN. Residues 394 to 402 lie on the Extracellular side of the membrane; sequence HRKQAASAL. The helical transmembrane segment at 403–429 threads the bilayer; it reads LFGMVALVTKPGQTFAPLLGTWLLCFY. The Cytoplasmic segment spans residues 430-466; it reads TGHDLFQQHPPAPVGSAQPWPEPPAPPPAQAPPLRQG. Residues 467–485 form a helical membrane-spanning segment; it reads CFYLLVLVPIACALLQLFT. The Extracellular portion of the chain corresponds to 486 to 517; that stretch reads WSQFTLHGRRLHMVKAQRQSLSRAQTLDVKMV.

The protein resides in the cell membrane. This Bos taurus (Bovine) protein is Transmembrane protein 180.